The sequence spans 145 residues: Hemoglobin subunit beta (145 aa).

The region spanning 1–145 is the Globin domain; the sequence is MLTAEEKAAV…VANALAHRYH (145 aa). T11 is modified (phosphothreonine). K58 bears the N6-acetyllysine mark. H62 contacts heme b. K81 carries the post-translational modification N6-acetyllysine. H91 is a binding site for heme b. C92 carries the S-nitrosocysteine modification.

It belongs to the globin family. As to quaternary structure, heterotetramer of two alpha chains and two beta chains. In terms of tissue distribution, red blood cells.

Involved in oxygen transport from the lung to the various peripheral tissues. The polypeptide is Hemoglobin subunit beta (HBB) (Alces alces alces (European moose)).